Consider the following 296-residue polypeptide: 33 kDa chaperonin (296 aa).

Intrachain disulfides connect cysteine 238–cysteine 240 and cysteine 271–cysteine 274.

Belongs to the HSP33 family. Under oxidizing conditions two disulfide bonds are formed involving the reactive cysteines. Under reducing conditions zinc is bound to the reactive cysteines and the protein is inactive.

Its subcellular location is the cytoplasm. Functionally, redox regulated molecular chaperone. Protects both thermally unfolding and oxidatively damaged proteins from irreversible aggregation. Plays an important role in the bacterial defense system toward oxidative stress. The protein is 33 kDa chaperonin of Clostridium botulinum (strain Loch Maree / Type A3).